An 858-amino-acid polypeptide reads, in one-letter code: MAHFSRVASDPSLAPQPSAPSGLDSSTTSSSSTGLHRSCTFCRARKIRCSSGPICSACRERNINCIYSPEARKGRPRRRGTNTSNAQAKKGDQENPTLGRELDRMFQEYFISKTGSRSNLFQNSIASFHRHIRKPTPAHTPAPTPRPKLSYDSLLSFLAHEMVEVLLLRFGAFGDEQLQSNPHQYFYITSLADETTPSMFDPPRRQKSPLAALGKHRVVQMVHFWFFMHPLSAVVSKTLLLSAIQDETVDTALLAIILADAFESFDPKDNPNTTGSVRPEESPQELLQFAASQLQHRPCSNVDAGPISTAQALILLGWREMSQGNARRATCYIGYTCRVVAREHQRRSRDEGDRERMKLNGTDIGEVEQEILRNIYWLCLSTTTWAFMQIDQPFTLLVPDEIPDFPSLDETTSAVLCLDRASNNISTLPSQVQAMRWLWPLSHVTSTVAHIYTLYLNAPTEESKVHAAPWHTRHIYQLHRLLRSRFHPSNLSLEIHGILIQAIQLVEREVTIPSTKSFLLTSYYTIIVHILFSPERRAPTPITPAIIQALGECISAILTIAARVPSLPTSQVPAQSSYATRTLAVSLDSCSHALVRLHSQYDWQLKEHRDAAPALTKLADYADQAHQVCRSDFLGNYASVLRPAKKRLKWVKSALRALCMSPSSQPVSMSEVTDAANAAFPSLSPKKTPFSLDRPGDLSLGSSACSIHDFIPQSPGFPPSQLVPPLEIPDPGFFSDNASFESLLGFPGMARSDIYSRTSNSPSSHLTMGTLDGQAFGNLFLMSPDISAPDVDSMLQSNPFDTSNPVSNSGAERVCGTGAGLLGRSTGAQYDSHLHMDASKPFPAWNPGIAEEYGKYGE.

The tract at residues 1–35 is disordered; that stretch reads MAHFSRVASDPSLAPQPSAPSGLDSSTTSSSSTGL. Residues 39 to 65 constitute a DNA-binding region (zn(2)-C6 fungal-type); the sequence is CTFCRARKIRCSSGPICSACRERNINC. Residues 72–99 form a disordered region; the sequence is RKGRPRRRGTNTSNAQAKKGDQENPTLG.

The protein localises to the nucleus. In terms of biological role, transcription factor that regulates the expression of the gene cluster that mediates the biosynthesis of Pyranterreones, a family of antioxidative compounds. This is Transcription factor pytR from Aspergillus terreus (strain NIH 2624 / FGSC A1156).